A 149-amino-acid polypeptide reads, in one-letter code: Large ribosomal subunit protein uL13 (149 aa).

This sequence belongs to the universal ribosomal protein uL13 family. In terms of assembly, part of the 50S ribosomal subunit.

Functionally, this protein is one of the early assembly proteins of the 50S ribosomal subunit, although it is not seen to bind rRNA by itself. It is important during the early stages of 50S assembly. The sequence is that of Large ribosomal subunit protein uL13 from Cyanothece sp. (strain PCC 7425 / ATCC 29141).